We begin with the raw amino-acid sequence, 511 residues long: MDIRPSEISKILKEQIKNFDQKAEVSEIGWVLSVGDGIARVYGLDNVQAGEMVAFPNGVRGMALNLEVDNVGVVIFGSDRDIREGDCVKRLGAIVDVPVGPALLGRVVDALGNPIDGKGPLKETERRRVDVKAPGIIPRQSVHEPMSTGLKAIDALIPIGRGQRELVIGDRQTGKTAILLDTFLNQKPFHEKGAGREQDKVYCIYVAIGQKRSTVAQFVKVLEERGALEYSIIVAATASDPAPLQFIAPLAGCAMGEYFRDNGQHALIGYDDLSKQAVAYRQMSLLLRRPPGREAYPGDVFYLHSRLLERAAKLNAENGSGSLTALPVIETQANDVSAYIPTNVISITDGQIFLETNLFYQGIRPAVNVGLSVSRVGSAAQIKAMKQVAGSIKGELAQYREMAAFAQFGSDLDASTQRLLNRGARLTELLKQPQFSPLKTEEQVVVIFAGVNGYLDSLAVSDVARFEQGLLVLLRSDYQDLLQAIAEQKQITDELKDKLITVLNTYAKNFS.

169–176 serves as a coordination point for ATP; the sequence is GDRQTGKT.

It belongs to the ATPase alpha/beta chains family. In terms of assembly, F-type ATPases have 2 components, CF(1) - the catalytic core - and CF(0) - the membrane proton channel. CF(1) has five subunits: alpha(3), beta(3), gamma(1), delta(1), epsilon(1). CF(0) has three main subunits: a(1), b(2) and c(9-12). The alpha and beta chains form an alternating ring which encloses part of the gamma chain. CF(1) is attached to CF(0) by a central stalk formed by the gamma and epsilon chains, while a peripheral stalk is formed by the delta and b chains.

The protein resides in the cell inner membrane. The catalysed reaction is ATP + H2O + 4 H(+)(in) = ADP + phosphate + 5 H(+)(out). In terms of biological role, produces ATP from ADP in the presence of a proton gradient across the membrane. The alpha chain is a regulatory subunit. This Bartonella tribocorum (strain CIP 105476 / IBS 506) protein is ATP synthase subunit alpha.